The chain runs to 331 residues: Ketol-acid reductoisomerase (NADP(+)) (331 aa).

The KARI N-terminal Rossmann domain maps to 4–183 (ATIYYDDDAE…GCTRAGVVET (180 aa)). NADP(+)-binding positions include 27 to 30 (YGSQ), arginine 50, serine 53, serine 55, and 85 to 88 (DTVQ). Residue histidine 109 is part of the active site. Residue glycine 135 coordinates NADP(+). A KARI C-terminal knotted domain is found at 184–329 (TFREETETDL…EDLRALFAWG (146 aa)). Mg(2+) contacts are provided by aspartate 192, glutamate 196, glutamate 228, and glutamate 232. Serine 253 is a binding site for substrate.

It belongs to the ketol-acid reductoisomerase family. Requires Mg(2+) as cofactor.

It carries out the reaction (2R)-2,3-dihydroxy-3-methylbutanoate + NADP(+) = (2S)-2-acetolactate + NADPH + H(+). The catalysed reaction is (2R,3R)-2,3-dihydroxy-3-methylpentanoate + NADP(+) = (S)-2-ethyl-2-hydroxy-3-oxobutanoate + NADPH + H(+). It functions in the pathway amino-acid biosynthesis; L-isoleucine biosynthesis; L-isoleucine from 2-oxobutanoate: step 2/4. It participates in amino-acid biosynthesis; L-valine biosynthesis; L-valine from pyruvate: step 2/4. In terms of biological role, involved in the biosynthesis of branched-chain amino acids (BCAA). Catalyzes an alkyl-migration followed by a ketol-acid reduction of (S)-2-acetolactate (S2AL) to yield (R)-2,3-dihydroxy-isovalerate. In the isomerase reaction, S2AL is rearranged via a Mg-dependent methyl migration to produce 3-hydroxy-3-methyl-2-ketobutyrate (HMKB). In the reductase reaction, this 2-ketoacid undergoes a metal-dependent reduction by NADPH to yield (R)-2,3-dihydroxy-isovalerate. The protein is Ketol-acid reductoisomerase (NADP(+)) of Natronomonas pharaonis (strain ATCC 35678 / DSM 2160 / CIP 103997 / JCM 8858 / NBRC 14720 / NCIMB 2260 / Gabara) (Halobacterium pharaonis).